The following is a 723-amino-acid chain: Probable dipeptidyl-peptidase 5 (723 aa).

Positions Met1–Ala19 are cleaved as a signal peptide. Asn79, Asn97, Asn154, Asn255, Asn381, and Asn451 each carry an N-linked (GlcNAc...) asparagine glycan. Ser561 functions as the Charge relay system in the catalytic mechanism. A glycan (N-linked (GlcNAc...) asparagine) is linked at Asn608. Catalysis depends on charge relay system residues Asp644 and His676.

The protein belongs to the peptidase S9C family.

Its subcellular location is the secreted. Functionally, extracellular dipeptidyl-peptidase which removes N-terminal dipeptides sequentially from polypeptides having unsubstituted N-termini. The polypeptide is Probable dipeptidyl-peptidase 5 (dpp5) (Aspergillus terreus (strain NIH 2624 / FGSC A1156)).